The chain runs to 913 residues: Valine--tRNA ligase (913 aa).

The 'HIGH' region signature appears at 48 to 58; that stretch reads PNVTGSLHMGH. Residues 541 to 545 carry the 'KMSKS' region motif; that stretch reads KMSKS. Lys-544 is a binding site for ATP. Residues 839–907 adopt a coiled-coil conformation; it reads VVDLEALVSK…IEHRLQSLGV (69 aa).

Belongs to the class-I aminoacyl-tRNA synthetase family. ValS type 1 subfamily. Monomer.

It is found in the cytoplasm. It catalyses the reaction tRNA(Val) + L-valine + ATP = L-valyl-tRNA(Val) + AMP + diphosphate. Functionally, catalyzes the attachment of valine to tRNA(Val). As ValRS can inadvertently accommodate and process structurally similar amino acids such as threonine, to avoid such errors, it has a 'posttransfer' editing activity that hydrolyzes mischarged Thr-tRNA(Val) in a tRNA-dependent manner. The sequence is that of Valine--tRNA ligase from Thermosynechococcus vestitus (strain NIES-2133 / IAM M-273 / BP-1).